The sequence spans 496 residues: 6-phosphogluconate dehydrogenase, decarboxylating (496 aa).

Residues 13–18, 24–26, 68–70, and Asn96 each bind NADP(+); these read GLDVSI, DNV, and ITH. Substrate-binding positions include Asn96 and 122–124; that span reads SGG. The Proton acceptor role is filled by Lys178. A substrate-binding site is contributed by 181 to 182; it reads HN. Glu185 functions as the Proton donor in the catalytic mechanism. Substrate is bound by residues Arg300 and His468. The segment at 476–496 is disordered; it reads PGEDPGPVSKGPHHYEWRPAK.

This sequence belongs to the 6-phosphogluconate dehydrogenase family. Homodimer.

It localises to the cytoplasm. The catalysed reaction is 6-phospho-D-gluconate + NADP(+) = D-ribulose 5-phosphate + CO2 + NADPH. It participates in carbohydrate degradation; pentose phosphate pathway; D-ribulose 5-phosphate from D-glucose 6-phosphate (oxidative stage): step 3/3. In terms of biological role, catalyzes the oxidative decarboxylation of 6-phosphogluconate to ribulose 5-phosphate and CO(2), with concomitant reduction of NADP to NADPH. The polypeptide is 6-phosphogluconate dehydrogenase, decarboxylating (Emericella nidulans (strain FGSC A4 / ATCC 38163 / CBS 112.46 / NRRL 194 / M139) (Aspergillus nidulans)).